Consider the following 291-residue polypeptide: Lipoyl synthase (291 aa).

Residues C33, C38, C44, C59, C63, C66, and S274 each contribute to the [4Fe-4S] cluster site. Positions 45-263 (WGEGTATFLI…REAAEAMGFK (219 aa)) constitute a Radical SAM core domain.

Belongs to the radical SAM superfamily. Lipoyl synthase family. It depends on [4Fe-4S] cluster as a cofactor.

It is found in the cytoplasm. It carries out the reaction [[Fe-S] cluster scaffold protein carrying a second [4Fe-4S](2+) cluster] + N(6)-octanoyl-L-lysyl-[protein] + 2 oxidized [2Fe-2S]-[ferredoxin] + 2 S-adenosyl-L-methionine + 4 H(+) = [[Fe-S] cluster scaffold protein] + N(6)-[(R)-dihydrolipoyl]-L-lysyl-[protein] + 4 Fe(3+) + 2 hydrogen sulfide + 2 5'-deoxyadenosine + 2 L-methionine + 2 reduced [2Fe-2S]-[ferredoxin]. The protein operates within protein modification; protein lipoylation via endogenous pathway; protein N(6)-(lipoyl)lysine from octanoyl-[acyl-carrier-protein]: step 2/2. Catalyzes the radical-mediated insertion of two sulfur atoms into the C-6 and C-8 positions of the octanoyl moiety bound to the lipoyl domains of lipoate-dependent enzymes, thereby converting the octanoylated domains into lipoylated derivatives. In Pyrobaculum calidifontis (strain DSM 21063 / JCM 11548 / VA1), this protein is Lipoyl synthase.